The chain runs to 167 residues: HTH-type transcriptional repressor IacR (167 aa).

A compositionally biased stretch (polar residues) spans 1–10 (MSNAKNTSAA). The disordered stretch occupies residues 1-25 (MSNAKNTSAASPARKGHSHHDPASD). In terms of domain architecture, HTH marR-type spans 30 to 162 (EDFPFYWLAR…LNRMLEVVFH (133 aa)). Residues 76-99 (ISEISTHAIAKLSTITKIVYRMKE) constitute a DNA-binding region (H-T-H motif).

Exposure to indole-3-acetic acid (IAA) probably relieves the repressor activity. Its function is as follows. Probably acts as a repressor of iacA expression. In Pseudomonas putida (Arthrobacter siderocapsulatus), this protein is HTH-type transcriptional repressor IacR.